The chain runs to 127 residues: Translation initiation factor 5A (127 aa).

Residue lysine 35 is modified to Hypusine.

It belongs to the eIF-5A family.

It localises to the cytoplasm. Its function is as follows. Functions by promoting the formation of the first peptide bond. The protein is Translation initiation factor 5A (eIF5A) of Methanothrix thermoacetophila (strain DSM 6194 / JCM 14653 / NBRC 101360 / PT) (Methanosaeta thermophila).